A 177-amino-acid polypeptide reads, in one-letter code: Large ribosomal subunit protein uL6 (177 aa).

This sequence belongs to the universal ribosomal protein uL6 family. Part of the 50S ribosomal subunit.

Functionally, this protein binds to the 23S rRNA, and is important in its secondary structure. It is located near the subunit interface in the base of the L7/L12 stalk, and near the tRNA binding site of the peptidyltransferase center. The sequence is that of Large ribosomal subunit protein uL6 from Psychromonas ingrahamii (strain DSM 17664 / CCUG 51855 / 37).